Here is a 456-residue protein sequence, read N- to C-terminus: Asparagine--tRNA ligase (456 aa).

Belongs to the class-II aminoacyl-tRNA synthetase family. Homodimer.

It localises to the cytoplasm. It catalyses the reaction tRNA(Asn) + L-asparagine + ATP = L-asparaginyl-tRNA(Asn) + AMP + diphosphate + H(+). The chain is Asparagine--tRNA ligase from Mycoplasma genitalium (strain ATCC 33530 / DSM 19775 / NCTC 10195 / G37) (Mycoplasmoides genitalium).